A 208-amino-acid chain; its full sequence is Harpin secretion protein HrpW (208 aa).

Transmembrane regions (helical) follow at residues 2–22, 46–66, 149–169, and 176–196; these read LALF…CTAF, ALYG…AHDI, IGFL…NLLL, and VSPM…VSGW.

Belongs to the FliP/MopC/SpaP family.

The protein resides in the cell membrane. Required for the secretion of harpin. This chain is Harpin secretion protein HrpW (hrpW), found in Pseudomonas syringae pv. syringae.